The sequence spans 394 residues: Phosphoglycerate kinase (394 aa).

Residues 21-23, Arg-37, 60-63, Arg-119, and Arg-152 contribute to the substrate site; these read DFN and HLGR. ATP contacts are provided by residues Lys-202, Gly-293, Glu-324, and 350-353; that span reads GGDS.

This sequence belongs to the phosphoglycerate kinase family. As to quaternary structure, monomer.

It is found in the cytoplasm. The catalysed reaction is (2R)-3-phosphoglycerate + ATP = (2R)-3-phospho-glyceroyl phosphate + ADP. It participates in carbohydrate degradation; glycolysis; pyruvate from D-glyceraldehyde 3-phosphate: step 2/5. This chain is Phosphoglycerate kinase, found in Caldanaerobacter subterraneus subsp. tengcongensis (strain DSM 15242 / JCM 11007 / NBRC 100824 / MB4) (Thermoanaerobacter tengcongensis).